Reading from the N-terminus, the 238-residue chain is Ribonuclease PH (238 aa).

Residues Arg-86 and 124 to 126 (GTR) contribute to the phosphate site.

The protein belongs to the RNase PH family. Homohexameric ring arranged as a trimer of dimers.

The catalysed reaction is tRNA(n+1) + phosphate = tRNA(n) + a ribonucleoside 5'-diphosphate. Functionally, phosphorolytic 3'-5' exoribonuclease that plays an important role in tRNA 3'-end maturation. Removes nucleotide residues following the 3'-CCA terminus of tRNAs; can also add nucleotides to the ends of RNA molecules by using nucleoside diphosphates as substrates, but this may not be physiologically important. Probably plays a role in initiation of 16S rRNA degradation (leading to ribosome degradation) during starvation. This is Ribonuclease PH from Psychrobacter cryohalolentis (strain ATCC BAA-1226 / DSM 17306 / VKM B-2378 / K5).